The primary structure comprises 546 residues: Probable zinc metalloprotease EGY2, chloroplastic (546 aa).

A chloroplast-targeting transit peptide spans 1-64 (MQLPAMSCSP…QIRNRRFVCQ (64 aa)). The segment at 67–143 (TETEPDGDGN…DATPASDAQE (77 aa)) is disordered. Over residues 69-86 (TEPDGDGNGDEEKEELGD) the composition is skewed to acidic residues. 2 stretches are compositionally biased toward polar residues: residues 89–110 (SSPS…TNAD) and 118–130 (NTEP…TVQN). 7 helical membrane-spanning segments follow: residues 257 to 277 (AVPE…TLLL), 301 to 321 (VYGA…HILA), 326 to 346 (GIKL…FGAI), 364 to 384 (AAGP…GFIL), 427 to 447 (PLVL…IPAG), 474 to 494 (LLGI…LIFF), and 514 to 534 (YISI…PYPF).

Belongs to the peptidase M50B family.

The protein localises to the plastid. The protein resides in the chloroplast membrane. Its function is as follows. Probable membrane-associated metalloprotease that may be involved in chloroplast development. In Oryza sativa subsp. japonica (Rice), this protein is Probable zinc metalloprotease EGY2, chloroplastic (EGY2).